A 644-amino-acid polypeptide reads, in one-letter code: MPDIQLPDGSHRQFAEPVTGLTLARAIGSGLARAAVAMRVDGILKDLSAVLDQDAEVAIVTRDSADGLEVIRHSTAHLLAQAVQSLYPEAQVTIGPVIDNGFYYDFAFPRGFTPEDLEAIEARMHALVKENLPVQREMLSREDAIALFEKMGEDYKVEIIRAIPRGEPLSLYRQGDFVDLCRGPHVPSTGVLGAFKLQRVAGAYWRGDSRNPMLQRIYGTAWAQQKDLDAYLQQLAEAEKRDHRRIGTELELFSIQEDAGGGLVFWHPMGSRVRRVIEDFWKEAHVEAGYDLLYTPHIAHEQLWYTSGHKDFYSESMFDPMQDEGQAYQLKPMNCPFHILIYKDKLHSYRDLPIRWAELGTVYRHEMSGALHGLMRVRGFTQDDAHVFCRPDQIEAEIGAVLVLVRKILGTFGFDQYEINLSTRPGHSVGSDEIWDAATQALRNALERAGLEYQVDAGGGAFYGPKIDLKIQDAIGRKWQCSTVQLDFNLPERFAMEYVAEDGARKVPIMVHRAIFGSIERFFGVLIEHYEGKFPVWLAPVQAVVLPISEHYSEYAESVSDVLVKRGIRAETDLRNEKIGYKIRAHTLRRVPYLLVVGEREKEAGTVAVRDRNGQDLGTLSIDAVGATLQKMDQARVNTLEWQG.

Residues Met-1–Thr-61 enclose the TGS domain. The interval Asp-242–Pro-535 is catalytic. 3 residues coordinate Zn(2+): Cys-335, His-386, and His-512.

The protein belongs to the class-II aminoacyl-tRNA synthetase family. In terms of assembly, homodimer. Zn(2+) serves as cofactor.

Its subcellular location is the cytoplasm. It catalyses the reaction tRNA(Thr) + L-threonine + ATP = L-threonyl-tRNA(Thr) + AMP + diphosphate + H(+). Its function is as follows. Catalyzes the attachment of threonine to tRNA(Thr) in a two-step reaction: L-threonine is first activated by ATP to form Thr-AMP and then transferred to the acceptor end of tRNA(Thr). Also edits incorrectly charged L-seryl-tRNA(Thr). This is Threonine--tRNA ligase from Acidithiobacillus ferrooxidans (strain ATCC 23270 / DSM 14882 / CIP 104768 / NCIMB 8455) (Ferrobacillus ferrooxidans (strain ATCC 23270)).